The sequence spans 574 residues: Glycine--tRNA ligase (574 aa).

Substrate contacts are provided by arginine 96 and glutamate 162. Residues 194 to 196 (RNE), 204 to 209 (IRLREF), 327 to 328 (EC), and 450 to 453 (GIDR) contribute to the ATP site. 209–213 (FTQAE) serves as a coordination point for substrate. 446–450 (EPSYG) contributes to the substrate binding site.

This sequence belongs to the class-II aminoacyl-tRNA synthetase family.

The protein resides in the cytoplasm. It catalyses the reaction tRNA(Gly) + glycine + ATP = glycyl-tRNA(Gly) + AMP + diphosphate. Functionally, catalyzes the attachment of glycine to tRNA(Gly). This is Glycine--tRNA ligase from Methanococcus maripaludis (strain C6 / ATCC BAA-1332).